We begin with the raw amino-acid sequence, 84 residues long: Small ribosomal subunit protein uS17 (84 aa).

Belongs to the universal ribosomal protein uS17 family. Part of the 30S ribosomal subunit.

Functionally, one of the primary rRNA binding proteins, it binds specifically to the 5'-end of 16S ribosomal RNA. This Nitrosomonas europaea (strain ATCC 19718 / CIP 103999 / KCTC 2705 / NBRC 14298) protein is Small ribosomal subunit protein uS17.